The chain runs to 822 residues: Outer dense fiber protein 2 (822 aa).

The segment at 26–45 is disordered; it reads KGQKTTPAKCQQKHKQKMKG. Coiled-coil stretches lie at residues 113–418, 452–490, and 516–796; these read CKMN…EECA, DKSD…ALMD, and MEEK…NYVQ.

The protein belongs to the ODF2 family. In terms of assembly, self-associates. Associates with microtubules and forms a fibrillar structure partially linked to the microtubule network.

The protein resides in the cytoplasm. It localises to the cytoskeleton. The protein localises to the microtubule organizing center. It is found in the centrosome. Its subcellular location is the cell projection. The protein resides in the cilium. It localises to the centriole. The protein localises to the spindle pole. It is found in the flagellum. In terms of biological role, seems to be a major component of sperm tail outer dense fibers (ODF). ODFs are filamentous structures located on the outside of the axoneme in the midpiece and principal piece of the mammalian sperm tail and may help to maintain the passive elastic structures and elastic recoil of the sperm tail. The protein is Outer dense fiber protein 2 (ODF2) of Gallus gallus (Chicken).